A 487-amino-acid chain; its full sequence is Protein NEN2 (487 aa).

The 162-residue stretch at 18 to 179 folds into the Exonuclease domain; the sequence is FFDVETTIPF…LDDVRMNFEV (162 aa). Residues Asp-20 and Glu-22 each contribute to the Mg(2+) site. His-167 serves as the catalytic Proton donor/acceptor. Residue Asp-172 coordinates Mg(2+). Disordered stretches follow at residues 200 to 233 and 269 to 291; these read NSVTTTTPETSSRRRRTIKKSPLQSPTDQQTGEN and SDVPMEEEQNQQSETVASEGTGD. A compositionally biased stretch (polar residues) spans 221 to 233; that stretch reads PLQSPTDQQTGEN.

Requires Mg(2+) as cofactor. In terms of tissue distribution, expressed in the sieve elements and phloem pole pericycle cells.

It localises to the cytoplasm. The protein resides in the nucleus. Functionally, probable exonuclease involved in enuclation of sieve elements. The polypeptide is Protein NEN2 (Arabidopsis thaliana (Mouse-ear cress)).